A 420-amino-acid chain; its full sequence is MATSLGSNTYNRQNWEDADFPILCQTCLGENPYIRMTKEKYGKECKICARPFTVFRWCPGVRMRFKKTEVCQTCSKLKNVCQTCLLDLEYGLPIQVRDAGLSFKDDMPKSDVNKEYYTQNMEREISNSDGTRPVGMLGKATSTSDMLLKLARTTPYYKRNRPHICSFWVKGECKRGEECPYRHEKPTDPDDPLADQNIKDRYYGINDPVADKLLKRASTMPRLDPPEDKTITTLYVGGLGDTITETDLRNHFYQFGEIRTVTVVQRQQCAFIQFATRQAAEVAAEKSFNKLIVNGRRLNVKWGRSQAARGKEKEKDGTTDSGIKLEPVPGLPGALPPPPAAEEEASANYFNLPPSGPPAVVNIALPPPPGIAPPPPPGFGPHLFHPMGPPPPFMRAPGPIHYPSQDPQRMGAHAGKHSSP.

A2 is modified (N-acetylalanine). Phosphoserine is present on residues S4 and S102. Glycyl lysine isopeptide (Lys-Gly) (interchain with G-Cter in SUMO2) cross-links involve residues K139 and K149. The segment at 159-186 (RNRPHICSFWVKGECKRGEECPYRHEKP) adopts a C3H1-type zinc-finger fold. K212 carries the N6-acetyllysine modification. One can recognise an RRM domain in the interval 232–305 (TTLYVGGLGD…RRLNVKWGRS (74 aa)). Residue K290 forms a Glycyl lysine isopeptide (Lys-Gly) (interchain with G-Cter in SUMO2) linkage. Disordered stretches follow at residues 303–343 (GRSQ…AAEE) and 371–420 (IAPP…HSSP). Basic and acidic residues predominate over residues 309-318 (RGKEKEKDGT).

The protein belongs to the SLT11 family. Component of the pre-catalytic and catalytic spliceosome complexes. Component of the postcatalytic spliceosome P complex. Interacts with PDCD6; the interaction induces translocation of PDCD6 in the cytoplasm. Interacts with PPIL1.

It is found in the nucleus. Its subcellular location is the cytoplasm. Its function is as follows. Required for pre-mRNA splicing as component of the activated spliceosome. Involved in the first step of pre-mRNA splicing. Binds directly to the internal stem-loop (ISL) domain of the U6 snRNA and to the pre-mRNA intron near the 5' splice site during the activation and catalytic phases of the spliceosome cycle. Involved in both translocations of the nuclear SLU7 to the cytoplasm and the cytosolic calcium-binding protein PDCD6 to the nucleus upon cellular stress responses. This chain is Pre-mRNA-splicing factor RBM22 (Rbm22), found in Rattus norvegicus (Rat).